The sequence spans 454 residues: Apyrase (454 aa).

Topologically, residues 1–7 (MLNQNSH) are cytoplasmic. A helical; Signal-anchor for type II membrane protein transmembrane segment spans residues 8 to 28 (FIFIILAIFLVLPLSLLSKNV). The Extracellular portion of the chain corresponds to 29-454 (NAQIPLRRHL…TTNKIRVASS (426 aa)). 48 to 58 (VIFDAGSTGSR) contributes to the ATP binding site. N-linked (GlcNAc...) asparagine glycosylation is present at asparagine 151. Residue glutamate 170 is the Proton acceptor of the active site. 194-204 (ATIDLGGGSVQ) is a binding site for ATP. An N-linked (GlcNAc...) asparagine glycan is attached at asparagine 262.

This sequence belongs to the GDA1/CD39 NTPase family. Requires Ca(2+) as cofactor. Post-translationally, the N-terminus is blocked.

It localises to the membrane. The catalysed reaction is a ribonucleoside 5'-triphosphate + 2 H2O = a ribonucleoside 5'-phosphate + 2 phosphate + 2 H(+). Functionally, catalyzes the hydrolysis of phosphoanhydride bonds of nucleoside tri- and di-phosphates. The protein is Apyrase (RROP1) of Solanum tuberosum (Potato).